Consider the following 131-residue polypeptide: MLSRLFAPKVKVSAHCDLPCGVYDPAQARIEAESVKAIQEKMAANDDLHFQIRATVIKEQRAELAKHHLDVLWSDYFKPPHFESYPELHTLVNEAVKALSAAKASTDPATGQKALDYIAQIDKIFWETKKA.

The propeptide occupies 1 to 14 (MLSRLFAPKVKVSA). Histidine 15, cysteine 16, and cysteine 20 together coordinate Ni(2+).

Belongs to the nickel superoxide dismutase family. In terms of assembly, homohexamer. The hexameric protein has roughly the shape of a hollow sphere with an outer diameter of 72 Angstroms and a large inner cavity. It depends on Ni(2+) as a cofactor.

It is found in the cytoplasm. It carries out the reaction 2 superoxide + 2 H(+) = H2O2 + O2. The polypeptide is Superoxide dismutase [Ni] (sodN) (Streptomyces seoulensis).